A 180-amino-acid polypeptide reads, in one-letter code: Inner membrane-spanning protein YciB (180 aa).

Transmembrane regions (helical) follow at residues 4–24 (FLSE…GGGI), 25–45 (QHAT…CYVI), 49–69 (VSKL…ITLI), 76–96 (IKIK…MSGI), 118–138 (ITLS…NEVV), and 150–170 (FKVF…LPLL).

It belongs to the YciB family.

It is found in the cell inner membrane. In terms of biological role, plays a role in cell envelope biogenesis, maintenance of cell envelope integrity and membrane homeostasis. The chain is Inner membrane-spanning protein YciB from Rickettsia rickettsii (strain Iowa).